A 181-amino-acid polypeptide reads, in one-letter code: Protein Syd (181 aa).

This sequence belongs to the Syd family.

The protein localises to the cell inner membrane. Interacts with the SecY protein in vivo. May bind preferentially to an uncomplexed state of SecY, thus functioning either as a chelating agent for excess SecY in the cell or as a regulatory factor that negatively controls the translocase function. The protein is Protein Syd of Alteromonas mediterranea (strain DSM 17117 / CIP 110805 / LMG 28347 / Deep ecotype).